The primary structure comprises 83 residues: Salivary thrombin inhibitor anophelin (83 aa).

The first 22 residues, 1-22, serve as a signal peptide directing secretion; that stretch reads MANKLVLISLLCVVLVAKITQA. The tract at residues 25 to 51 is disordered; it reads QYAPGDEPSYDEDTDDSDKLVENDTSI. N-linked (GlcNAc...) asparagine glycosylation is present at Asn-47. The sufficient for host thrombin inhibition stretch occupies residues 54–83; that stretch reads EDYAAIEASLSETFNTAADPGRRLGEGSKP. The tract at residues 56-62 is blocks exosite I of host thrombin; that stretch reads YAAIEAS. Positions 64–83 are disordered; that stretch reads SETFNTAADPGRRLGEGSKP. A blocks active site cleft of host thrombin in a reverse direction compared to substrates region spans residues 72-75; sequence DPGR. The span at 73–83 shows a compositional bias: basic and acidic residues; it reads PGRRLGEGSKP.

The protein belongs to the anophelin family. In terms of assembly, interacts with human F2 (thrombin); the interaction results in thrombin inhibition. In terms of tissue distribution, salivary gland (at protein level).

The protein localises to the secreted. With respect to regulation, increasing concentration of NaCl decreases affinity for thrombin. Its function is as follows. Salivary protein with anticoagulant activity that inhibits host thrombin (F2); binds to the proteinase in a reverse orientation (opposite to substrates). Inhibits thrombin-induced platelet aggregation. This Anopheles albimanus (New world malaria mosquito) protein is Salivary thrombin inhibitor anophelin.